Consider the following 502-residue polypeptide: Probable malate:quinone oxidoreductase (502 aa).

It belongs to the MQO family. FAD is required as a cofactor.

It carries out the reaction (S)-malate + a quinone = a quinol + oxaloacetate. The protein operates within carbohydrate metabolism; tricarboxylic acid cycle; oxaloacetate from (S)-malate (quinone route): step 1/1. This is Probable malate:quinone oxidoreductase from Parasynechococcus marenigrum (strain WH8102).